A 259-amino-acid polypeptide reads, in one-letter code: MSEKFVELRKEFLTKLYKSTPSEQTSRSEKETWLEEKSKYLGEMTRELNEVQDQIAPYDRRVCMEQLVDLTRRLQQIRHDILPRQPFRFQRALHVKSSQKPVKNITVNAEAPEVYFENDTLYLANLKNQNIGDNVIPYPNNKAVKVSAKSLRSCNISISNCSSVNLHNATKCNFTFPTIQGSIHLSDINDSTICVSCHQFRLHHSTNLRVHLRCKTSPVIEESKEISFSYKDEHPILDFTWARSDPSPHFRITSDLFDA.

Positions 112-241 constitute a C-CAP/cofactor C-like domain; sequence PEVYFENDTL…DEHPILDFTW (130 aa).

Belongs to the TBCC family.

The protein resides in the cytoplasm. It is found in the cytoskeleton. Its function is as follows. Tubulin-folding protein; involved in the final step of the tubulin folding pathway. This Schizosaccharomyces pombe (strain 972 / ATCC 24843) (Fission yeast) protein is Tubulin-specific chaperone C (cin2).